A 1011-amino-acid polypeptide reads, in one-letter code: Probable calcium-transporting ATPase (1011 aa).

At 1–65 (MLPENLPTDP…WKLVLAQFED (65 aa)) the chain is on the cytoplasmic side. The chain crosses the membrane as a helical span at residues 66 to 84 (TLVRILLLAATVSFAMAVV). Over 85 to 90 (ENNAAD) the chain is Extracellular. The helical transmembrane segment at 91–110 (FVEPFIILLILILNATVGVW) threads the bilayer. Topologically, residues 111-258 (QENRAEGAIE…QVKLDEFGVL (148 aa)) are cytoplasmic. The chain crosses the membrane as a helical span at residues 259 to 278 (LSKVIGYICLVVFAVNLVRW). Over 279–303 (YATHKPTKNETFFTRYIQPSVHCLK) the chain is Extracellular. Residues 304-321 (VAVALAVAAIPEGLPAVV) form a helical membrane-spanning segment. Residues 322–770 (TTCLALGTRR…RYLISSNIGE (449 aa)) are Cytoplasmic-facing. The active-site 4-aspartylphosphate intermediate is the aspartate 357. Residue lysine 514 coordinates ATP. The helical transmembrane segment at 771 to 794 (VVCILVTGLFGLPEALSPVQLLWV) threads the bilayer. Residues 795–835 (NLVTDGLPATALGFNAPDRDIMEQRPRRMEEPIVNGWLFMR) are Extracellular-facing. Residues 836-856 (YMVIGVYVGLATVGGFLWWFL) form a helical membrane-spanning segment. Over 857–885 (RHGFSWHDLTTYTACSDMTNGTCLLLANP) the chain is Cytoplasmic. Residues 886-905 (QTARAIALSILVVVEMLNAL) traverse the membrane as a helical segment. Residues 906 to 922 (NALSENASLIVSRPSSN) lie on the Extracellular side of the membrane. Residues 923–942 (VWLLFAIFSSLSLHLIIMYV) form a helical membrane-spanning segment. The Cytoplasmic portion of the chain corresponds to 943–1011 (PFFAKLFNIV…MEKAQEKKKD (69 aa)).

The protein belongs to the cation transport ATPase (P-type) (TC 3.A.3) family.

It localises to the flagellar pocket. The protein resides in the cell membrane. The enzyme catalyses Ca(2+)(in) + ATP + H2O = Ca(2+)(out) + ADP + phosphate + H(+). In terms of biological role, this magnesium-dependent enzyme catalyzes the hydrolysis of ATP coupled with the transport of the calcium. The protein is Probable calcium-transporting ATPase (TBA1) of Trypanosoma brucei brucei.